The following is a 227-amino-acid chain: Cytochrome c oxidase subunit 2 (227 aa).

Residues 1 to 14 (MAYPFQLGLQDATS) lie on the Mitochondrial intermembrane side of the membrane. A helical membrane pass occupies residues 15–45 (PIMEELMNFHDHTLMIVFLISSLVLYIISLM). The Mitochondrial matrix portion of the chain corresponds to 46–59 (LTTKLTHTSTMDAQ). The helical transmembrane segment at 60–87 (EVETIWTILPAAILILIALPSLRILYMM) threads the bilayer. The Mitochondrial intermembrane segment spans residues 88–227 (DEINNPVLTV…YFENWSASMI (140 aa)). Cu cation is bound by residues H161, C196, E198, C200, H204, and M207. E198 is a Mg(2+) binding site.

It belongs to the cytochrome c oxidase subunit 2 family. In terms of assembly, component of the cytochrome c oxidase (complex IV, CIV), a multisubunit enzyme composed of 14 subunits. The complex is composed of a catalytic core of 3 subunits MT-CO1, MT-CO2 and MT-CO3, encoded in the mitochondrial DNA, and 11 supernumerary subunits COX4I, COX5A, COX5B, COX6A, COX6B, COX6C, COX7A, COX7B, COX7C, COX8 and NDUFA4, which are encoded in the nuclear genome. The complex exists as a monomer or a dimer and forms supercomplexes (SCs) in the inner mitochondrial membrane with NADH-ubiquinone oxidoreductase (complex I, CI) and ubiquinol-cytochrome c oxidoreductase (cytochrome b-c1 complex, complex III, CIII), resulting in different assemblies (supercomplex SCI(1)III(2)IV(1) and megacomplex MCI(2)III(2)IV(2)). Found in a complex with TMEM177, COA6, COX18, COX20, SCO1 and SCO2. Interacts with TMEM177 in a COX20-dependent manner. Interacts with COX20. Interacts with COX16. The cofactor is Cu cation.

Its subcellular location is the mitochondrion inner membrane. It carries out the reaction 4 Fe(II)-[cytochrome c] + O2 + 8 H(+)(in) = 4 Fe(III)-[cytochrome c] + 2 H2O + 4 H(+)(out). In terms of biological role, component of the cytochrome c oxidase, the last enzyme in the mitochondrial electron transport chain which drives oxidative phosphorylation. The respiratory chain contains 3 multisubunit complexes succinate dehydrogenase (complex II, CII), ubiquinol-cytochrome c oxidoreductase (cytochrome b-c1 complex, complex III, CIII) and cytochrome c oxidase (complex IV, CIV), that cooperate to transfer electrons derived from NADH and succinate to molecular oxygen, creating an electrochemical gradient over the inner membrane that drives transmembrane transport and the ATP synthase. Cytochrome c oxidase is the component of the respiratory chain that catalyzes the reduction of oxygen to water. Electrons originating from reduced cytochrome c in the intermembrane space (IMS) are transferred via the dinuclear copper A center (CU(A)) of subunit 2 and heme A of subunit 1 to the active site in subunit 1, a binuclear center (BNC) formed by heme A3 and copper B (CU(B)). The BNC reduces molecular oxygen to 2 water molecules using 4 electrons from cytochrome c in the IMS and 4 protons from the mitochondrial matrix. This chain is Cytochrome c oxidase subunit 2 (MT-CO2), found in Leggadina forresti (Forrest's mouse).